We begin with the raw amino-acid sequence, 349 residues long: N-acetyl-gamma-glutamyl-phosphate reductase (349 aa).

Residue Cys149 is part of the active site.

Belongs to the NAGSA dehydrogenase family. Type 1 subfamily.

It is found in the cytoplasm. It catalyses the reaction N-acetyl-L-glutamate 5-semialdehyde + phosphate + NADP(+) = N-acetyl-L-glutamyl 5-phosphate + NADPH + H(+). It functions in the pathway amino-acid biosynthesis; L-arginine biosynthesis; N(2)-acetyl-L-ornithine from L-glutamate: step 3/4. Functionally, catalyzes the NADPH-dependent reduction of N-acetyl-5-glutamyl phosphate to yield N-acetyl-L-glutamate 5-semialdehyde. The polypeptide is N-acetyl-gamma-glutamyl-phosphate reductase (Acinetobacter baumannii (strain SDF)).